The primary structure comprises 1008 residues: G protein-regulated inducer of neurite outgrowth 1 (1008 aa).

Residues 1–859 (MDTAEDPAWL…SPPSRRDAGL (859 aa)) form a disordered region. Phosphothreonine is present on T60. A phosphoserine mark is found at S64 and S75. Residues 117 to 127 (ISGTPEATTSG) show a composition bias toward polar residues. Composition is skewed to basic and acidic residues over residues 137 to 159 (TEPK…KSSK), 167 to 178 (GKEDPGSSRKAD), 230 to 269 (PRKE…HPVS), and 279 to 291 (EKVD…KRDP). The residue at position 237 (S237) is a Phosphoserine. 2 stretches are compositionally biased toward polar residues: residues 326–336 (SGKNGPVSSGT) and 391–406 (HTDT…TSLK). A phosphoserine mark is found at S436 and S452. A compositionally biased stretch (basic and acidic residues) spans 454–466 (GKEDPVSSRREDP). The span at 481 to 491 (PESSGKTNPVS) shows a compositional bias: polar residues. Basic and acidic residues predominate over residues 549–559 (GKEDPVSKGKA). S615 carries the phosphoserine modification. Over residues 643–656 (PGQEGAAAPGEAGA) the composition is skewed to low complexity. The span at 659–679 (LKKETPQASEKVDPGSCRKAE) shows a compositional bias: basic and acidic residues. S737 bears the Phosphoserine mark. Basic and acidic residues predominate over residues 742–752 (RGSEGRVEPKA). Polar residues predominate over residues 755-764 (VSSTEASSLG). S799 is subject to Phosphoserine. Residues 838–847 (SAFSFQAAPR) are compositionally biased toward low complexity. T877 is modified (phosphothreonine). Residues S895 and S914 each carry the phosphoserine modification. Positions 899–1008 (AAVAPPEPAE…CCSRAGPTAE (110 aa)) are interaction with GNAO1. The disordered stretch occupies residues 943–986 (ERQIEEHGRQGAPAPPPAARAGPGRSGSVRTAPPDGAAKRPPGL). Residue S993 is modified to Phosphoserine. S-palmitoyl cysteine attachment occurs at residues C999 and C1000.

As to quaternary structure, interacts with activated forms of GNAI1, GNAO1 and GNAZ. Palmitoylation on Cys-999 and/or Cys-1000 is required for membrane targeting. Widely expressed in the central nervous system, with highest levels in spinal cord.

Its subcellular location is the cell membrane. The protein resides in the cell projection. It localises to the growth cone. In terms of biological role, may be involved in neurite outgrowth. In Homo sapiens (Human), this protein is G protein-regulated inducer of neurite outgrowth 1 (GPRIN1).